The primary structure comprises 80 residues: RNA-binding protein Hfq (80 aa).

The Sm domain maps to 10-69 (DPFLNVLRKEHIPVSIYLVNGIKLQGHIDSFDQYVVLLRNSVTQMVYKHAISTIVPGKAV).

This sequence belongs to the Hfq family. In terms of assembly, homohexamer.

Functionally, RNA chaperone that binds small regulatory RNA (sRNAs) and mRNAs to facilitate mRNA translational regulation in response to envelope stress, environmental stress and changes in metabolite concentrations. Also binds with high specificity to tRNAs. The sequence is that of RNA-binding protein Hfq from Nitrosomonas eutropha (strain DSM 101675 / C91 / Nm57).